A 342-amino-acid polypeptide reads, in one-letter code: S-adenosylmethionine:tRNA ribosyltransferase-isomerase (342 aa).

Belongs to the QueA family. Monomer.

The protein localises to the cytoplasm. The enzyme catalyses 7-aminomethyl-7-carbaguanosine(34) in tRNA + S-adenosyl-L-methionine = epoxyqueuosine(34) in tRNA + adenine + L-methionine + 2 H(+). Its pathway is tRNA modification; tRNA-queuosine biosynthesis. Transfers and isomerizes the ribose moiety from AdoMet to the 7-aminomethyl group of 7-deazaguanine (preQ1-tRNA) to give epoxyqueuosine (oQ-tRNA). This is S-adenosylmethionine:tRNA ribosyltransferase-isomerase from Streptococcus agalactiae serotype V (strain ATCC BAA-611 / 2603 V/R).